Here is a 663-residue protein sequence, read N- to C-terminus: DNA ligase (663 aa).

Residues 33-37, 82-83, and glutamate 112 contribute to the NAD(+) site; these read DYSYD and SI. Lysine 114 serves as the catalytic N6-AMP-lysine intermediate. NAD(+)-binding residues include arginine 135, glutamate 171, lysine 285, and lysine 309. Zn(2+) contacts are provided by cysteine 403, cysteine 406, cysteine 419, and cysteine 424. One can recognise a BRCT domain in the interval 581–663; it reads DKEAPLQGKV…LRILDAKSVS (83 aa).

The protein belongs to the NAD-dependent DNA ligase family. LigA subfamily. Mg(2+) serves as cofactor. The cofactor is Mn(2+).

It carries out the reaction NAD(+) + (deoxyribonucleotide)n-3'-hydroxyl + 5'-phospho-(deoxyribonucleotide)m = (deoxyribonucleotide)n+m + AMP + beta-nicotinamide D-nucleotide.. Its function is as follows. DNA ligase that catalyzes the formation of phosphodiester linkages between 5'-phosphoryl and 3'-hydroxyl groups in double-stranded DNA using NAD as a coenzyme and as the energy source for the reaction. It is essential for DNA replication and repair of damaged DNA. This chain is DNA ligase, found in Chlamydia trachomatis serovar D (strain ATCC VR-885 / DSM 19411 / UW-3/Cx).